The primary structure comprises 481 residues: Solute carrier family 46 member 2 (481 aa).

The Cytoplasmic portion of the chain corresponds to 1–37 (MGPEAAGPGRGAAPRLQVRTWIEPVVAATQVASSLYE). A helical transmembrane segment spans residues 38 to 58 (AGLLLVVKASFGAGAGAGAGA). Topologically, residues 59 to 83 (ASNHSAGPPRGAPEDQQQRAISNFY) are extracellular. The N-linked (GlcNAc...) asparagine glycan is linked to N61. Residues 84–104 (IVYNLVVGLTPLLSAYALGWL) form a helical membrane-spanning segment. Residues 105-113 (SDRRHRKVA) are Cytoplasmic-facing. A helical membrane pass occupies residues 114 to 134 (ICVALLGFLLSRVGLLLKVLL). Residues 135 to 143 (DWPVEVLYG) lie on the Extracellular side of the membrane. The chain crosses the membrane as a helical span at residues 144–164 (AAALNGLCGGFSAFWAGVMAL). The Cytoplasmic segment spans residues 165–179 (GSLGSSEGRRSVRLV). Residues 180-200 (LIDLILGLAGFCGSMASGHLF) form a helical membrane-spanning segment. At 201–210 (KQVAGHSGQG) the chain is on the extracellular side. The chain crosses the membrane as a helical span at residues 211–231 (LVLTACSVSCATFALLYSLLV). The Cytoplasmic segment spans residues 232 to 286 (LKVPEAAAGSGQALSAGDSVAGTVGTYRTLDPDHSDKQSVQGLHPPSPGKAKPRR). The disordered stretch occupies residues 263 to 282 (PDHSDKQSVQGLHPPSPGKA). Residues 287 to 307 (TIIALLFLGAIVYDLAVVGTV) form a helical membrane-spanning segment. The Extracellular portion of the chain corresponds to 308–326 (DVMPLFVLREPLSWNQVQV). The chain crosses the membrane as a helical span at residues 327-347 (GYGMAAGYTIFITSFLGVLVF). The Cytoplasmic segment spans residues 348–353 (SRCFQD). A helical membrane pass occupies residues 354–374 (TTMIMIGMVSFGSGALLLAFV). The Extracellular portion of the chain corresponds to 375 to 376 (KE). The chain crosses the membrane as a helical span at residues 377–397 (TYMFYIARAVMLFALIPITTI). Topologically, residues 398 to 412 (RSAMSKLIKGSSYGK) are cytoplasmic. A helical transmembrane segment spans residues 413 to 433 (VFVILQLSLTLTGVVTSTVYN). Topologically, residues 434 to 446 (KIYQVTMEKFIGT) are extracellular. Residues 447-467 (CFALSSFLSFLAIIPIGIVAY) traverse the membrane as a helical segment. At 468–481 (KQASWLQYGDVRET) the chain is on the cytoplasmic side.

The protein belongs to the major facilitator superfamily. SLC46A family. Post-translationally, glycosylated. As to expression, highly expressed by the epididymal duct epithelium.

The protein localises to the endosome membrane. Its subcellular location is the cell membrane. The enzyme catalyses N-acetyl-beta-D-glucosaminyl-(1-&gt;4)-1,6-anhydro-N-acetyl-beta-D-muramoyl-L-alanyl-gamma-D-glutamyl-meso-2,6-diaminopimeloyl-D-alanine(out) + n H(+)(out) = N-acetyl-beta-D-glucosaminyl-(1-&gt;4)-1,6-anhydro-N-acetyl-beta-D-muramoyl-L-alanyl-gamma-D-glutamyl-meso-2,6-diaminopimeloyl-D-alanine(in) + n H(+)(in). The catalysed reaction is L-alanyl-gamma-D-glutamyl-meso-2,6-diaminopimelate(out) + n H(+)(out) = L-alanyl-gamma-D-glutamyl-meso-2,6-diaminopimelate(in) + n H(+)(in). It catalyses the reaction N-acetyl-D-muramoyl-L-alanyl-D-isoglutamine(out) + n H(+)(out) = N-acetyl-D-muramoyl-L-alanyl-D-isoglutamine(in) + n H(+)(in). It carries out the reaction 2',3'-cGAMP(out) + n H(+)(out) = 2',3'-cGAMP(in) + n H(+)(in). The enzyme catalyses 3',3'-cGAMP(out) + n H(+)(out) = 3',3'-cGAMP(in) + n H(+)(in). Its function is as follows. Proton-coupled transporter that delivers pathogen-associated or danger-associated molecular patterns to cytosolic pattern recognition receptors as part of the innate immune response to microbes or tissue injury. Has selectivity toward muropeptides that contain the amino acid diaminopimelic acid (DAP-type peptidoglycan muropeptides) including Tri-DAP and tracheal toxin (TCT), common in Gram-negative bacteria and Gram-positive bacilli. In the context of immune recognition of skin microbiota, shuttles bacterial muropeptides across the endolysosomal membranes into the cytosol for recognition by NOD1, triggering MYD88-dependent secretion of IL1A and neutrophil recruitment in a pyroptosis-type inflammatory process. To a lesser extent and redundantly, transports muramyl dipeptides derived from most bacterial proteoglycans, eliciting NOD2 receptor activation and downstream inflammatory responses. Postulated to function as an importer of cyclic GMP-AMP dinucleotides (cGAMPs) in monocyte and macrophage cell lineages. Selectively imports cGAMPs derived from pathogenic bacteria such as 3'3'-cGAMP thus providing for differential immune recognition of pathogenic versus commensal bacteria. During tumorigenesis may transport extracellular tumor-derived 2'3'-cGAMP across the plasma membrane of M1-polarized macrophages to activate the anti-tumoral stimulator of interferon genes (STING) pathway. The transport mechanism, its electrogenicity and stoichiometry remain to be elucidated. The sequence is that of Solute carrier family 46 member 2 from Canis lupus familiaris (Dog).